The primary structure comprises 194 residues: Troponin I 4 (194 aa).

The segment at 1–27 is disordered; that stretch reads MSDVDADEARKMAERERKKEEVRKRLE. The segment covering 7 to 27 has biased composition (basic and acidic residues); it reads DEARKMAERERKKEEVRKRLE.

The protein belongs to the troponin I family. Expression is detected only in pharyngeal muscle cells from embryos to adults.

Its function is as follows. Troponin I is the inhibitory subunit of troponin, the thin filament regulatory complex which confers calcium-sensitivity to muscle actomyosin ATPase activity. The protein is Troponin I 4 (tni-4) of Caenorhabditis elegans.